The primary structure comprises 203 residues: MFAYFRGRLTSAMPDEAVVDVSGIGYRFLVSAFTYRQLPPPGEDVLLYAHLSVKEDAFLLYGFSSESERQLFRLLLLTTGVGPKLALAVLSGLQVHEVHEAIMANAPERLYGISGVGKKTAARIILELRDRILKMSPDGGKTIASGSGGNLALQIKDDALNALITLGFSKPAAQKAVTGILEGNPSLSVEEVVKSALVSIHNS.

The interval 1 to 64 (MFAYFRGRLT…EDAFLLYGFS (64 aa)) is domain I. Residues 65 to 143 (SESERQLFRL…KMSPDGGKTI (79 aa)) are domain II. Positions 144-150 (ASGSGGN) are flexible linker. Residues 151–203 (LALQIKDDALNALITLGFSKPAAQKAVTGILEGNPSLSVEEVVKSALVSIHNS) form a domain III region.

This sequence belongs to the RuvA family. In terms of assembly, homotetramer. Forms an RuvA(8)-RuvB(12)-Holliday junction (HJ) complex. HJ DNA is sandwiched between 2 RuvA tetramers; dsDNA enters through RuvA and exits via RuvB. An RuvB hexamer assembles on each DNA strand where it exits the tetramer. Each RuvB hexamer is contacted by two RuvA subunits (via domain III) on 2 adjacent RuvB subunits; this complex drives branch migration. In the full resolvosome a probable DNA-RuvA(4)-RuvB(12)-RuvC(2) complex forms which resolves the HJ.

It is found in the cytoplasm. Functionally, the RuvA-RuvB-RuvC complex processes Holliday junction (HJ) DNA during genetic recombination and DNA repair, while the RuvA-RuvB complex plays an important role in the rescue of blocked DNA replication forks via replication fork reversal (RFR). RuvA specifically binds to HJ cruciform DNA, conferring on it an open structure. The RuvB hexamer acts as an ATP-dependent pump, pulling dsDNA into and through the RuvAB complex. HJ branch migration allows RuvC to scan DNA until it finds its consensus sequence, where it cleaves and resolves the cruciform DNA. In Chlorobium limicola (strain DSM 245 / NBRC 103803 / 6330), this protein is Holliday junction branch migration complex subunit RuvA.